We begin with the raw amino-acid sequence, 345 residues long: S-adenosylmethionine:tRNA ribosyltransferase-isomerase (345 aa).

This sequence belongs to the QueA family. As to quaternary structure, monomer.

It is found in the cytoplasm. The enzyme catalyses 7-aminomethyl-7-carbaguanosine(34) in tRNA + S-adenosyl-L-methionine = epoxyqueuosine(34) in tRNA + adenine + L-methionine + 2 H(+). It participates in tRNA modification; tRNA-queuosine biosynthesis. Transfers and isomerizes the ribose moiety from AdoMet to the 7-aminomethyl group of 7-deazaguanine (preQ1-tRNA) to give epoxyqueuosine (oQ-tRNA). The chain is S-adenosylmethionine:tRNA ribosyltransferase-isomerase from Shewanella baltica (strain OS185).